The primary structure comprises 287 residues: Nucleotide-binding protein Gbem_0872 (287 aa).

8–15 lines the ATP pocket; it reads GLSGSGKS. Position 59 to 62 (59 to 62) interacts with GTP; it reads DIRS.

The protein belongs to the RapZ-like family.

In terms of biological role, displays ATPase and GTPase activities. This is Nucleotide-binding protein Gbem_0872 from Citrifermentans bemidjiense (strain ATCC BAA-1014 / DSM 16622 / JCM 12645 / Bem) (Geobacter bemidjiensis).